The following is a 509-amino-acid chain: Serine/threonine protein kinase OSK4 (509 aa).

Residues Tyr17–Phe269 form the Protein kinase domain. Residues Leu23 to Val31 and Lys46 contribute to the ATP site. Asp140 functions as the Proton acceptor in the catalytic mechanism. The UBA domain occupies Met290–Asp330. Residues Asn460–Val508 enclose the KA1 domain.

The protein belongs to the protein kinase superfamily. Ser/Thr protein kinase family. Interacts with HDR1. In terms of tissue distribution, strongly expressed in immature seeds. Mostly expressed in panicles, leaf sheaths and roots, and to a lower extent, in germinating seeds and leaf blades.

The protein localises to the nucleus. It catalyses the reaction L-seryl-[protein] + ATP = O-phospho-L-seryl-[protein] + ADP + H(+). It carries out the reaction L-threonyl-[protein] + ATP = O-phospho-L-threonyl-[protein] + ADP + H(+). In terms of biological role, suppressor of flowering in long days (LD) via the that up-regulation of HD1 and the down-regulation of EHD1. Can phosphorylate HD1 in the presence of HDR1. The chain is Serine/threonine protein kinase OSK4 from Oryza sativa subsp. indica (Rice).